We begin with the raw amino-acid sequence, 291 residues long: ATP synthase subunit a (291 aa).

Transmembrane regions (helical) follow at residues 47 to 67 (FTNL…LVFV), 140 to 160 (HFLI…IVGF), 167 to 187 (FFSF…LVLL), 207 to 227 (MMAG…MLFL), and 230 to 250 (IFYF…TGLE).

This sequence belongs to the ATPase A chain family. In terms of assembly, F-type ATPases have 2 components, CF(1) - the catalytic core - and CF(0) - the membrane proton channel. CF(1) has five subunits: alpha(3), beta(3), gamma(1), delta(1), epsilon(1). CF(0) has three main subunits: a, b and c.

It is found in the mitochondrion inner membrane. In terms of biological role, mitochondrial membrane ATP synthase (F(1)F(0) ATP synthase or Complex V) produces ATP from ADP in the presence of a proton gradient across the membrane which is generated by electron transport complexes of the respiratory chain. F-type ATPases consist of two structural domains, F(1) - containing the extramembraneous catalytic core and F(0) - containing the membrane proton channel, linked together by a central stalk and a peripheral stalk. During catalysis, ATP synthesis in the catalytic domain of F(1) is coupled via a rotary mechanism of the central stalk subunits to proton translocation. Key component of the proton channel; it may play a direct role in the translocation of protons across the membrane. In Zea mays (Maize), this protein is ATP synthase subunit a (ATP6).